The sequence spans 177 residues: Peptide deformylase (177 aa).

Residues cysteine 99 and histidine 141 each coordinate Fe cation. The active site involves glutamate 142. Histidine 145 contacts Fe cation.

The protein belongs to the polypeptide deformylase family. Fe(2+) is required as a cofactor.

The catalysed reaction is N-terminal N-formyl-L-methionyl-[peptide] + H2O = N-terminal L-methionyl-[peptide] + formate. Functionally, removes the formyl group from the N-terminal Met of newly synthesized proteins. Requires at least a dipeptide for an efficient rate of reaction. N-terminal L-methionine is a prerequisite for activity but the enzyme has broad specificity at other positions. This is Peptide deformylase from Rhizorhabdus wittichii (strain DSM 6014 / CCUG 31198 / JCM 15750 / NBRC 105917 / EY 4224 / RW1) (Sphingomonas wittichii).